The following is a 478-amino-acid chain: PRAME family member 26 (478 aa).

An LRR 1; degenerate repeat occupies 99–126 (RWKLQVLDLQDVCENFWMVWSEAMARGC). One copy of the LRR 2; degenerate repeat lies at 181–205 (HLCCKKLKILGMPFRNIRSILKMVN). An LRR 3; degenerate repeat occupies 206 to 232 (LDCIQEVEVNCKWVLPILTQFTPYLGH). An LRR 4; degenerate repeat occupies 233–268 (MRNLQKLVLSHMDVSRYVSPEQKKEIVTQFTTQFLK). 5 LRR repeats span residues 269-294 (LHCLQKLYMNSVSFLEGHLDQLLSCL), 295-326 (KTSLKVLTITNCVLLESDLKHLSQCPSISQLK), 327-347 (TLDLSGIRLTNYSLVPLQILL), 351-378 (AATLEYLDLDDCGIIDSQVNAILPALSR), and 379-403 (CFELNTFSFCGNPISMATLENLLSH).

This sequence belongs to the PRAME family.

This Homo sapiens (Human) protein is PRAME family member 26.